Here is a 284-residue protein sequence, read N- to C-terminus: RNase adapter protein RapZ (284 aa).

8-15 (GRSGSGKS) lines the ATP pocket. Residue 56-59 (DVRN) participates in GTP binding. The tract at residues 266–284 (RSRGKNVQSRHRTLEKRKS) is RNA-binding.

Belongs to the RapZ-like family. RapZ subfamily. As to quaternary structure, homotrimer.

In terms of biological role, modulates the synthesis of GlmS, by affecting the processing and stability of the regulatory small RNA GlmZ. When glucosamine-6-phosphate (GlcN6P) concentrations are high in the cell, RapZ binds GlmZ and targets it to cleavage by RNase E. Consequently, GlmZ is inactivated and unable to activate GlmS synthesis. Under low GlcN6P concentrations, RapZ is sequestered and inactivated by an other regulatory small RNA, GlmY, preventing GlmZ degradation and leading to synthesis of GlmS. This chain is RNase adapter protein RapZ, found in Klebsiella oxytoca.